The following is a 289-amino-acid chain: Lipoyl synthase 2 (289 aa).

[4Fe-4S] cluster is bound by residues Cys43, Cys48, Cys54, Cys69, Cys73, Cys76, and Ser282. The Radical SAM core domain occupies 55 to 271 (YAQKTATFLL…GAVARDLGFA (217 aa)).

Belongs to the radical SAM superfamily. Lipoyl synthase family. The cofactor is [4Fe-4S] cluster.

The protein resides in the cytoplasm. It catalyses the reaction [[Fe-S] cluster scaffold protein carrying a second [4Fe-4S](2+) cluster] + N(6)-octanoyl-L-lysyl-[protein] + 2 oxidized [2Fe-2S]-[ferredoxin] + 2 S-adenosyl-L-methionine + 4 H(+) = [[Fe-S] cluster scaffold protein] + N(6)-[(R)-dihydrolipoyl]-L-lysyl-[protein] + 4 Fe(3+) + 2 hydrogen sulfide + 2 5'-deoxyadenosine + 2 L-methionine + 2 reduced [2Fe-2S]-[ferredoxin]. Its pathway is protein modification; protein lipoylation via endogenous pathway; protein N(6)-(lipoyl)lysine from octanoyl-[acyl-carrier-protein]: step 2/2. Catalyzes the radical-mediated insertion of two sulfur atoms into the C-6 and C-8 positions of the octanoyl moiety bound to the lipoyl domains of lipoate-dependent enzymes, thereby converting the octanoylated domains into lipoylated derivatives. This is Lipoyl synthase 2 from Gloeobacter violaceus (strain ATCC 29082 / PCC 7421).